Here is a 655-residue protein sequence, read N- to C-terminus: Inactive serine protease scarface (655 aa).

An N-terminal signal peptide occupies residues 1–24; sequence MSASHFREQLALCITLAVLAAASG. 2 stretches are compositionally biased toward polar residues: residues 213–225 and 237–252; these read TQAPFRPQPTTAV and PSTTQHPSYEKVQTSR. Residues 213–319 form a disordered region; sequence TQAPFRPQPT…QPSNQKPIYR (107 aa). The interval 343–407 is CLIP; that stretch reads KCASALVCTS…PNYVDPWPVN (65 aa). 7 disulfide bridges follow: cysteine 344–cysteine 394, cysteine 350–cysteine 383, cysteine 356–cysteine 395, cysteine 450–cysteine 466, cysteine 547–cysteine 605, cysteine 579–cysteine 587, and cysteine 595–cysteine 623. The 224-residue stretch at 421–644 folds into the Peptidase S1 domain; that stretch reads PTGVKDLDAN…DIKWINTAFA (224 aa).

The protein belongs to the peptidase S1 family.

Its subcellular location is the secreted. Its function is as follows. Inactive serine protease that plays a role in germ-band retraction and dorsal closure morphogenesis in embryogenesis; contributes to amnioserosa attachment and epithelial apico-basal polarity by regulating the localization of laminin LanA on the apical side of the amnioserosa epithelium. Contributes to epithelial morphogenesis probably by regulating the bsk/JNK pathway, as part of a negative-feedback loop, and by modulating the cross-talk between the Egfr, bsk/JNK and dpp signal transduction pathways. In larval development, antagonizes the morphogenetic movements controlled by the bsk/JNK signaling including male genitalia formation and thorax development. This is Inactive serine protease scarface from Drosophila melanogaster (Fruit fly).